A 250-amino-acid polypeptide reads, in one-letter code: Transcriptional activator protein EchR (250 aa).

In terms of domain architecture, HTH luxR-type spans 173–238 (KSQEPNIFSQ…HAIRLGVEMN (66 aa)). The H-T-H motif DNA-binding region spans 197–216 (YQEIALILGITTSTVKFHIG).

This sequence belongs to the autoinducer-regulated transcriptional regulatory protein family.

Functionally, functions as a potential ohlL-responsive transcriptional regulator. The sequence is that of Transcriptional activator protein EchR (echR) from Dickeya chrysanthemi (Pectobacterium chrysanthemi).